Reading from the N-terminus, the 312-residue chain is Ubiquinone biosynthesis protein COQ9, mitochondrial (312 aa).

The transit peptide at 1–45 (MAATAAVSGVLRRLGWRLLQLRCLPVARCQSPLMPRAFHTAVGFR) directs the protein to the mitochondrion. The SIFI-degron signature appears at 17 to 32 (RLLQLRCLPVARCQSP). Residues 43-92 (GFRSSEEQRQQPPHSSQQHSETQGPEFSRPPPRYTDQSGEEEEDYESEEQ) are disordered. The segment covering 52–63 (QQPPHSSQQHSE) has biased composition (low complexity). Ser-80 is subject to Phosphoserine. The span at 80–91 (SGEEEEDYESEE) shows a compositional bias: acidic residues. Lys-169 carries the N6-acetyllysine modification. An a 1,2-diacylglycero-3-phosphoethanolamine-binding site is contributed by Arg-238.

The protein belongs to the COQ9 family. Homodimer. Heterodimer; two heterodimers of COQ7:COQ9 come together on the same side of the lipid pseudo-bilayer and form a curved tetramer with a hydrophobic surface suitable for membrane interaction. These two tetramers assemble into a soluble octamer with a pseudo-bilayer of lipids captured within. Interacts with COQ7; this interaction allows ubiquinone (CoQ) isoprene intermediates presentation to COQ7 and facilitates the COQ7-mediated hydroxylase step. Post-translationally, in response to mitochondrial stress, the precursor protein is ubiquitinated by the SIFI complex in the cytoplasm before mitochondrial import, leading to its degradation. Within the SIFI complex, UBR4 initiates ubiquitin chain that are further elongated or branched by KCMF1.

The protein resides in the mitochondrion. Its pathway is cofactor biosynthesis; ubiquinone biosynthesis. Its function is as follows. Membrane-associated protein that warps the membrane surface to access and bind aromatic isoprenes with high specificity, including ubiquinone (CoQ) isoprene intermediates and presents them directly to COQ7, therefore facilitating the COQ7-mediated hydroxylase step. Participates in the biosynthesis of coenzyme Q, also named ubiquinone, an essential lipid-soluble electron transporter for aerobic cellular respiration. This is Ubiquinone biosynthesis protein COQ9, mitochondrial from Rattus norvegicus (Rat).